A 124-amino-acid chain; its full sequence is Small ribosomal subunit protein bS6 (124 aa).

Belongs to the bacterial ribosomal protein bS6 family.

Its function is as follows. Binds together with bS18 to 16S ribosomal RNA. This is Small ribosomal subunit protein bS6 from Actinobacillus pleuropneumoniae serotype 7 (strain AP76).